The chain runs to 461 residues: Homogentisate 1,2-dioxygenase (461 aa).

Fe cation-binding residues include H341, E347, and H377.

The protein belongs to the homogentisate dioxygenase family. Fe cation serves as cofactor.

It carries out the reaction homogentisate + O2 = 4-maleylacetoacetate + H(+). It functions in the pathway amino-acid degradation; L-phenylalanine degradation; acetoacetate and fumarate from L-phenylalanine: step 4/6. This is Homogentisate 1,2-dioxygenase (HGO) from Arabidopsis thaliana (Mouse-ear cress).